We begin with the raw amino-acid sequence, 403 residues long: Acetate kinase (403 aa).

Asparagine 8 serves as a coordination point for Mg(2+). Lysine 15 lines the ATP pocket. Arginine 90 is a substrate binding site. Residue aspartate 147 is the Proton donor/acceptor of the active site. ATP contacts are provided by residues 207-211 (HLGSG), 282-284 (DLR), and 330-334 (GVGEN). Glutamate 384 is a Mg(2+) binding site.

It belongs to the acetokinase family. In terms of assembly, homodimer. Mg(2+) serves as cofactor. It depends on Mn(2+) as a cofactor.

It localises to the cytoplasm. The enzyme catalyses acetate + ATP = acetyl phosphate + ADP. Its pathway is metabolic intermediate biosynthesis; acetyl-CoA biosynthesis; acetyl-CoA from acetate: step 1/2. Functionally, catalyzes the formation of acetyl phosphate from acetate and ATP. Can also catalyze the reverse reaction. This Exiguobacterium sibiricum (strain DSM 17290 / CCUG 55495 / CIP 109462 / JCM 13490 / 255-15) protein is Acetate kinase.